Reading from the N-terminus, the 295-residue chain is Non-selective voltage-gated ion channel VDAC2 (295 aa).

2 residues coordinate ATP: Lys-24 and Lys-32. Position 32 is an N6-acetyllysine; alternate (Lys-32). Lys-32 is modified (N6-succinyllysine; alternate). Residue Lys-32 forms a Glycyl lysine isopeptide (Lys-Gly) (interchain with G-Cter in ubiquitin); alternate linkage. Transmembrane regions (beta stranded) follow at residues 38–45 (LVKLDVKT) and 51–60 (VEFSTSGSSN). Lys-65 participates in a covalent cross-link: Glycyl lysine isopeptide (Lys-Gly) (interchain with G-Cter in ubiquitin). The chain crosses the membrane as a beta stranded span at residues 66–76 (VSGTLETKYKW). Tyr-79 is modified (phosphotyrosine). Transmembrane regions (beta stranded) follow at residues 81–88 (LTFTEKWN), 92–100 (TLGTEIAIE), and 107–116 (LKLTFDTTFS). Phosphothreonine is present on Thr-119. Lys-121 carries the post-translational modification N6-acetyllysine; alternate. A Glycyl lysine isopeptide (Lys-Gly) (interchain with G-Cter in ubiquitin); alternate cross-link involves residue Lys-121. Lys-122 participates in a covalent cross-link: Glycyl lysine isopeptide (Lys-Gly) (interchain with G-Cter in ubiquitin). Beta stranded transmembrane passes span 122-131 (KSGKIKSAYK), 135-144 (INLGCDVDFD), 148-157 (PAIHGSAVFG), and 161-170 (WLAGYQMTFD). Residue Lys-173 forms a Glycyl lysine isopeptide (Lys-Gly) (interchain with G-Cter in ubiquitin) linkage. Transmembrane regions (beta stranded) follow at residues 177-187 (TRSNFAVGYRT), 190-197 (FQLHTNVN), 201-210 (EFGGSIYQKV), 214-222 (FDTSVNLAW), 229-238 (TRFGIAAKYQ), and 243-250 (ASISAKVN). Ser-252 carries the post-translational modification Phosphoserine. NAD(+)-binding positions include 254 to 256 (LIG) and 272 to 276 (SALVD). Beta stranded transmembrane passes span 254–263 (LIGVGYTQTL) and 267–275 (VKLTLSALV). N6-acetyllysine; alternate is present on Lys-278. Lys-278 participates in a covalent cross-link: Glycyl lysine isopeptide (Lys-Gly) (interchain with G-Cter in ubiquitin); alternate. The beta stranded transmembrane segment at 285–295 (HKLGLALELEA) threads the bilayer.

Belongs to the eukaryotic mitochondrial porin family. As to quaternary structure, monomer, homodimer and higher order oligomers; formation of higher order structures is necessary for scramblase activity. Interacts with ARMC12 in a TBC1D21-dependent manner. Interacts with KLC3. Interacts with SPATA33. Interacts with PPP3CC in a SPATA33-dependent manner. Post-translationally, ubiquitinated by PRKN during mitophagy, leading to its degradation and enhancement of mitophagy. Deubiquitinated by USP30. In terms of tissue distribution, highest levels of expression detected in testis, less but still abundant expression in heart, kidney, brain, and skeletal muscle. Expressed in the sperm midpiece (at protein level).

It is found in the mitochondrion outer membrane. The protein localises to the membrane. It carries out the reaction chloride(in) = chloride(out). The catalysed reaction is K(+)(in) = K(+)(out). The enzyme catalyses a 1,2-diacyl-sn-glycero-3-phospho-L-serine(in) = a 1,2-diacyl-sn-glycero-3-phospho-L-serine(out). It catalyses the reaction a 1,2-diacyl-sn-glycero-3-phosphocholine(in) = a 1,2-diacyl-sn-glycero-3-phosphocholine(out). It carries out the reaction a 1,2-diacyl-sn-glycero-3-phospho-(1D-myo-inositol)(in) = a 1,2-diacyl-sn-glycero-3-phospho-(1D-myo-inositol)(out). In terms of biological role, non-selective voltage-gated ion channel that mediates the transport of anions and cations through the mitochondrion outer membrane and plasma membrane. The channel adopts an open conformation at zero mV and a closed conformation at both positive and negative potentials. There are two populations of channels; the main that functions in a lower open-state conductance with lower ion selectivity, that switch, in a voltage-dependent manner, from the open to a low-conducting 'closed' state and the other that has a normal ion selectivity in the typical high conductance, 'open' state. Binds various lipids, including the sphingolipid ceramide, the phospholipid phosphatidylcholine, and the sterols cholesterol and oxysterol. Binding of ceramide promotes the mitochondrial outer membrane permeabilization (MOMP) apoptotic pathway. Its function is as follows. Catalyzes the scrambling of phospholipids across the outer mitochondrial membrane; the mechanism is unrelated to channel activity and is capable of translocating both anionic and zwitterionic phospholipids. This Mus musculus (Mouse) protein is Non-selective voltage-gated ion channel VDAC2.